Here is a 296-residue protein sequence, read N- to C-terminus: 4-hydroxybenzoate octaprenyltransferase (296 aa).

The next 8 membrane-spanning stretches (helical) occupy residues P28 to G48, L52 to I72, A102 to S122, T145 to A167, S174 to V196, N219 to F239, L241 to W261, and F275 to F295.

It belongs to the UbiA prenyltransferase family. Requires Mg(2+) as cofactor.

It localises to the cell inner membrane. It catalyses the reaction all-trans-octaprenyl diphosphate + 4-hydroxybenzoate = 4-hydroxy-3-(all-trans-octaprenyl)benzoate + diphosphate. Its pathway is cofactor biosynthesis; ubiquinone biosynthesis. In terms of biological role, catalyzes the prenylation of para-hydroxybenzoate (PHB) with an all-trans polyprenyl group. Mediates the second step in the final reaction sequence of ubiquinone-8 (UQ-8) biosynthesis, which is the condensation of the polyisoprenoid side chain with PHB, generating the first membrane-bound Q intermediate 3-octaprenyl-4-hydroxybenzoate. This Pseudomonas putida (strain GB-1) protein is 4-hydroxybenzoate octaprenyltransferase.